A 781-amino-acid chain; its full sequence is N-acetylneuraminate (7)9-O-acetyltransferase (781 aa).

Topologically, residues 1–15 (MAVLAYNLGKREINQ) are cytoplasmic. Residues 16 to 36 (YFSIKNAKLLAAAAVVLLTVF) traverse the membrane as a helical segment. Residues 37-308 (HAASRHYGSS…SAPPLSVLQK (272 aa)) lie on the Lumenal side of the membrane. The active-site Acyl-ester intermediate is the serine 94. Asparagine 139, asparagine 185, and asparagine 239 each carry an N-linked (GlcNAc...) asparagine glycan. Catalysis depends on residues aspartate 264 and histidine 267. Residues 309–329 (LAAAVLLVSVVCFVLLGFSSH) traverse the membrane as a helical segment. A disordered region spans residues 330 to 350 (RKSRPAPDVESGEEKKHPAAV). The Cytoplasmic segment spans residues 330–354 (RKSRPAPDVESGEEKKHPAAVGQLN). Residues 355–375 (PKGPLLAIGKMSLIMLYFYLC) traverse the membrane as a helical segment. Residues 376–386 (DRADIFMKEQK) lie on the Lumenal side of the membrane. The helical transmembrane segment at 387–407 (FYTHSAFFIPLIYIFVLGVFY) threads the bilayer. The Cytoplasmic segment spans residues 408-430 (SENSKETKLLNREQTDEWKGWMQ). Residues 431–451 (LVILIYHISGASAFIPVYMHV) form a helical membrane-spanning segment. A topological domain (lumenal) is located at residue arginine 452. The chain crosses the membrane as a helical span at residues 453–473 (VLVAAYLFQTGYGHFSFFWLK). At 474-477 (GDFG) the chain is on the cytoplasmic side. Residues 478 to 498 (LYRVCQVLFRLNFLVVVLCLV) traverse the membrane as a helical segment. Over 499-504 (MDRPYQ) the chain is Lumenal. A helical transmembrane segment spans residues 505–525 (FYYFVPLVTFWFAVIYATMAL). At 526–537 (WPQILQKQANGS) the chain is on the cytoplasmic side. Residues 538–558 (AFWNLALLLKLLGLLLFIGFF) traverse the membrane as a helical segment. Residues 559–595 (AYSQELFEGIFSVWPLSKLFELQGSIHEWWFRWKLDR) lie on the Lumenal side of the membrane. A helical membrane pass occupies residues 596 to 616 (FAVVNGMLFAFIYLLLQKYQL). The Cytoplasmic portion of the chain corresponds to 617–629 (LSEGKGEPLFSNK). A helical transmembrane segment spans residues 630-650 (ISNCLLFVSVVSFMTYSIWAS). Residues 651–660 (GCKNKSECNE) are Lumenal-facing. N-linked (GlcNAc...) asparagine glycosylation is present at asparagine 654. A helical membrane pass occupies residues 661 to 681 (MHPYISVILAFILIRNIPGYA). Residues 682–687 (RSLYSS) lie on the Cytoplasmic side of the membrane. The chain crosses the membrane as a helical span at residues 688–708 (FFAWFGKISLELFICQYHIWL). The Lumenal segment spans residues 709–714 (AADTKG). The chain crosses the membrane as a helical span at residues 715–735 (ILVLIPGNPTLNIIVSTFIFV). The Cytoplasmic segment spans residues 736–756 (CVAHEISQITNDLAQVAIPKE). The chain crosses the membrane as a helical span at residues 757 to 777 (SGPLLKRLLGAGVFLVLVLTL). Over 778–781 (SQKD) the chain is Lumenal.

Belongs to the PC-esterase family. CASD1 subfamily.

Its subcellular location is the golgi apparatus membrane. It carries out the reaction CMP-N-acetyl-beta-neuraminate + acetyl-CoA = CMP-N-acetyl-9-O-acetyl-beta-neuraminate + CoA. The enzyme catalyses a ganglioside GD3 (d18:1(4E)) + acetyl-CoA = a ganglioside Ac-O-7-GD3(d18:1(4E)) + CoA. It catalyses the reaction CMP-N-acetyl-beta-neuraminate + acetyl-CoA = CMP-N-acetyl-7-O-acetyl-beta-neuraminate + CoA. Its function is as follows. Key enzyme in the biosynthesis of O-acetylated (O-Ac) sialoglycans such as gangliosides O-AcGD3 and O-AcGD2, which affect various processes such as cell-cell interactions, host-pathogen recognition. Catalyzes the transfer of an acetyl group from a donor, the acetyl-coenzyme-A molecule (acetyl-CoA), to the C7/8/9 OH-position of a sialic acid residue. The primary site of O-acetyl group transfer on sialic acid seems to depend on cell type and can be C7, from which the O-acetyl group could subsequently migrate to the C8 and then to the C9 position, or at C9 with possibility of migrating to the C8 and then to the C7 position. Together with ST8SIA1 (GD3 synthase) it increases the levels of ganglioside Ac-O-7-GD3. Can transfer the acetyl group from acetyl-CoA to free sialate (N-acetylneuraminate, Neu5Ac) in vitro, but has preferred substrate specificity for CMP-activated sialate (CMP-Neu5Ac), resulting in the formation of 9-O-acetylated CMP-Neu5Ac (CMP-Neu5,9Ac2). CMP-Neu5,9Ac2 may be used by sialyltransferases as a sialate donor for glycoconjugate acceptors such as ganglioside GD3. O-acetylation at position C9 of ganglioside GD3 can counteract the pro-apoptotic effects of the ganglioside GD3 in tumor cells. This is N-acetylneuraminate (7)9-O-acetyltransferase from Danio rerio (Zebrafish).